Consider the following 238-residue polypeptide: Uridylate kinase (238 aa).

12–15 (KLSG) provides a ligand contact to ATP. G54 serves as a coordination point for UMP. ATP contacts are provided by G55 and R59. UMP-binding positions include D74 and 135 to 142 (TGNPFFTT). 3 residues coordinate ATP: T162, Y168, and D171.

This sequence belongs to the UMP kinase family. In terms of assembly, homohexamer.

It is found in the cytoplasm. The catalysed reaction is UMP + ATP = UDP + ADP. It participates in pyrimidine metabolism; CTP biosynthesis via de novo pathway; UDP from UMP (UMPK route): step 1/1. Inhibited by UTP. In terms of biological role, catalyzes the reversible phosphorylation of UMP to UDP. The chain is Uridylate kinase from Herminiimonas arsenicoxydans.